The following is a 1177-amino-acid chain: Lysylphosphatidylglycerol biosynthesis bifunctional protein LysX (1177 aa).

2 disordered regions span residues 1–40 and 61–85; these read MRRAGRSRQFSSVEEAFSTSAARPGRRGRRSGRENTAKFV and VTLASPGSRSGSGPRSGPRLGPANR. Residues 1-676 form a phosphatidylglycerol lysyltransferase region; the sequence is MRRAGRSRQF…LLHHDGSAPD (676 aa). Over residues 8–21 the composition is skewed to polar residues; that stretch reads RQFSSVEEAFSTSA. The segment covering 65-82 has biased composition (low complexity); that stretch reads SPGSRSGSGPRSGPRLGP. Transmembrane regions (helical) follow at residues 93 to 113, 135 to 155, 159 to 179, 189 to 209, 227 to 247, and 281 to 301; these read VPAAAGWTVGVIATVSLLGSV, FPDTSIAWSFVLALLAAALTA, IAWLLLLGNMILAAALNVADI, IFGENLGFAVHIVAIVLLVLA, AVLVAGDVVGILVSWGLVELF, and VFLNAIFGLFGALALIMATIV. Residues 673 to 693 are disordered; it reads SAPDVSGLRPERTDAEEARSR. Positions 677 to 1177 are lysine--tRNA ligase; that stretch reads VSGLRPERTD…TLPFPLAKPH (501 aa). Over residues 681-693 the composition is skewed to basic and acidic residues; sequence RPERTDAEEARSR. Residues aspartate 1089 and glutamate 1096 each contribute to the Mg(2+) site.

In the N-terminal section; belongs to the LPG synthetase family. This sequence in the C-terminal section; belongs to the class-II aminoacyl-tRNA synthetase family. The cofactor is Mg(2+).

The protein resides in the cell membrane. It catalyses the reaction tRNA(Lys) + L-lysine + ATP = L-lysyl-tRNA(Lys) + AMP + diphosphate. The enzyme catalyses L-lysyl-tRNA(Lys) + a 1,2-diacyl-sn-glycero-3-phospho-(1'-sn-glycerol) = a 1,2-diacyl-sn-glycero-3-phospho-1'-(3'-O-L-lysyl)-sn-glycerol + tRNA(Lys). Catalyzes the production of L-lysyl-tRNA(Lys)transfer and the transfer of a lysyl group from L-lysyl-tRNA(Lys) to membrane-bound phosphatidylglycerol (PG), which produces lysylphosphatidylglycerol (LPG), one of the components of the bacterial membrane with a positive net charge. LPG synthesis contributes to the resistance to cationic antimicrobial peptides (CAMPs) and likely protects M.tuberculosis against the CAMPs produced by competiting microorganisms (bacteriocins). In fact, the modification of anionic phosphatidylglycerol with positively charged L-lysine results in repulsion of the peptides. This is Lysylphosphatidylglycerol biosynthesis bifunctional protein LysX (lysX) from Mycobacterium avium (strain 104).